The primary structure comprises 95 residues: Defensin-A3 (95 aa).

Residues 1–19 (MRTLGLLLALLFLAAQTPA) form the signal peptide. Residues 20–61 (QLMGEEAEEATGRPEATEAQEAAAALMAARAADRHVTDPEQQ) constitute a propeptide that is removed on maturation. 3 cysteine pairs are disulfide-bonded: cysteine 66/cysteine 93, cysteine 68/cysteine 82, and cysteine 72/cysteine 92.

It belongs to the alpha-defensin family. In terms of tissue distribution, highly expressed in spleen, and expressed at lower levels in intestin and lung.

The protein resides in the secreted. Functionally, has antimicrobial activity. The sequence is that of Defensin-A3 from Ornithorhynchus anatinus (Duckbill platypus).